Here is a 217-residue protein sequence, read N- to C-terminus: Aprataxin-like protein (217 aa).

The HIT domain occupies 6–139 (ALKNYVTSPE…HIHVISKDFH (134 aa)). Interaction with DNA regions lie at residues 34–38 (DSFPK), 121–132 (HSVPSMANLHIH), and 144–148 (KNKKH). His-130 functions as the Nucleophile in the catalytic mechanism. Zn(2+)-binding residues include Cys-188, Cys-191, His-205, and Glu-209.

Its subcellular location is the nucleus. The protein resides in the cytoplasm. The catalysed reaction is a 5'-end adenosine-5'-diphospho-5'-2'-deoxyribonucleoside-DNA + H2O = a 5'-end 5'-phospho-2'-deoxyribonucleoside-DNA + AMP + 2 H(+). It catalyses the reaction a 5'-end adenosine-5'-diphospho-5'-ribonucleoside-2'-deoxyribonucleotide-DNA + H2O = a 5'-end 5'-phospho-ribonucleoside-2'-deoxyribonucleotide-DNA + AMP + 2 H(+). The enzyme catalyses a 3'-end 2'-deoxyribonucleotide-3'-diphospho-5'-guanosine-DNA + H2O = a 3'-end 2'-deoxyribonucleotide 3'-phosphate-DNA + GMP + 2 H(+). In terms of biological role, DNA-binding protein involved in single-strand DNA break repair, double-strand DNA break repair and base excision repair. Resolves abortive DNA ligation intermediates formed either at base excision sites, or when DNA ligases attempt to repair non-ligatable breaks induced by reactive oxygen species. Catalyzes the release of adenylate groups covalently linked to 5'-phosphate termini, resulting in the production of 5'-phosphate termini that can be efficiently rejoined. Likewise, catalyzes the release of 3'-linked guanosine (DNAppG) and inosine (DNAppI) from DNA, but has higher specific activity with 5'-linked adenosine (AppDNA). The chain is Aprataxin-like protein (HNT3) from Saccharomyces cerevisiae (strain ATCC 204508 / S288c) (Baker's yeast).